The following is a 282-amino-acid chain: Pantothenate synthetase (282 aa).

ATP is bound at residue 30–37 (MGYLHEGH). The active-site Proton donor is histidine 37. Glutamine 61 lines the (R)-pantoate pocket. Residue glutamine 61 coordinates beta-alanine. Residue 147-150 (GMKD) participates in ATP binding. A (R)-pantoate-binding site is contributed by glutamine 153. ATP is bound by residues valine 176 and 184 to 187 (KSSR).

Belongs to the pantothenate synthetase family. As to quaternary structure, homodimer.

It localises to the cytoplasm. It carries out the reaction (R)-pantoate + beta-alanine + ATP = (R)-pantothenate + AMP + diphosphate + H(+). The protein operates within cofactor biosynthesis; (R)-pantothenate biosynthesis; (R)-pantothenate from (R)-pantoate and beta-alanine: step 1/1. Functionally, catalyzes the condensation of pantoate with beta-alanine in an ATP-dependent reaction via a pantoyl-adenylate intermediate. This is Pantothenate synthetase from Bacillus thuringiensis (strain Al Hakam).